The primary structure comprises 412 residues: Maintenance of mitochondrial morphology protein 1 (412 aa).

At 1-81 the chain is on the lumenal side; the sequence is MTKELIKTEA…PANNWTFTQG (81 aa). The chain crosses the membrane as a helical span at residues 82-102; that stretch reads LVLGQISVIFIIIVFVKFFVF. At 103 to 412 the chain is on the cytoplasmic side; sequence ADSSTIPTKK…RSDSGTSENL (310 aa). The 218-residue stretch at 165–382 folds into the SMP-LTD domain; it reads SPESLDWFNV…EPRFQVVRLP (218 aa). The disordered stretch occupies residues 389-412; it reads KNTREPINKKTSVSRSDSGTSENL. Residues 397–412 are compositionally biased toward polar residues; the sequence is KKTSVSRSDSGTSENL.

It belongs to the MMM1 family. Homodimer. Component of the ER-mitochondria encounter structure (ERMES) or MDM complex, composed of MMM1, MDM10, MDM12 and MDM34. An MMM1 homodimer associates with one molecule of MDM12 on each side in a pairwise head-to-tail manner, and the SMP-LTD domains of MMM1 and MDM12 generate a continuous hydrophobic tunnel for phospholipid trafficking.

Its subcellular location is the endoplasmic reticulum membrane. Component of the ERMES/MDM complex, which serves as a molecular tether to connect the endoplasmic reticulum (ER) and mitochondria. Components of this complex are involved in the control of mitochondrial shape and protein biogenesis, and function in nonvesicular lipid trafficking between the ER and mitochondria. The MDM12-MMM1 subcomplex functions in the major beta-barrel assembly pathway that is responsible for biogenesis of all outer membrane beta-barrel proteins, and acts in a late step after the SAM complex. The MDM10-MDM12-MMM1 subcomplex further acts in the TOM40-specific pathway after the action of the MDM12-MMM1 complex. Essential for establishing and maintaining the structure of mitochondria and maintenance of mtDNA nucleoids. The chain is Maintenance of mitochondrial morphology protein 1 from Candida tropicalis (strain ATCC MYA-3404 / T1) (Yeast).